The sequence spans 55 residues: Protein CADMIUM TOLERANCE 1 (55 aa).

The chain crosses the membrane as a helical span at residues 24-40 (GCLYACIFTALCCFCCY).

It belongs to the CYSTM1 family.

The protein resides in the cell membrane. The protein localises to the secreted. It localises to the cell wall. Confers resistance to heavy metal ions (e.g. cadmium (CdCl(2)) and copper (CuCl(2))) by chelating them at the plasma membrane of root cells, thus stopping their entry and reducing their accumulation. In Echinochloa crus-galli subsp. caudata (Cockspur), this protein is Protein CADMIUM TOLERANCE 1.